Consider the following 202-residue polypeptide: Hypoxanthine-guanine phosphoribosyltransferase (202 aa).

Diphosphate-binding residues include K66 and G67. Mg(2+)-binding residues include E122 and D123. The Proton acceptor role is filled by D126. GMP is bound by residues K154, 175-176 (FV), and D182. Diphosphate is bound at residue R188.

Belongs to the purine/pyrimidine phosphoribosyltransferase family. It depends on Mg(2+) as a cofactor.

It is found in the cytoplasm. The catalysed reaction is IMP + diphosphate = hypoxanthine + 5-phospho-alpha-D-ribose 1-diphosphate. The enzyme catalyses GMP + diphosphate = guanine + 5-phospho-alpha-D-ribose 1-diphosphate. The protein operates within purine metabolism; IMP biosynthesis via salvage pathway; IMP from hypoxanthine: step 1/1. It functions in the pathway purine metabolism; GMP biosynthesis via salvage pathway; GMP from guanine: step 1/1. In terms of biological role, purine salvage pathway enzyme that catalyzes the transfer of the ribosyl-5-phosphate group from 5-phospho-alpha-D-ribose 1-diphosphate (PRPP) to the N9 position of the 6-oxopurines hypoxanthine and guanine to form the corresponding ribonucleotides IMP (inosine 5'-monophosphate) and GMP (guanosine 5'-monophosphate), with the release of PPi. The chain is Hypoxanthine-guanine phosphoribosyltransferase (hpt) from Mycobacterium tuberculosis (strain CDC 1551 / Oshkosh).